The chain runs to 385 residues: Exopolygalacturonase rpg15 (385 aa).

The N-terminal stretch at 1–26 (MVRFISFTSPIAALLLLSFGVKHAST) is a signal peptide. N-linked (GlcNAc...) asparagine glycans are attached at residues Asn-143, Asn-161, Asn-164, and Asn-180. PbH1 repeat units lie at residues 165 to 195 (STNLVLHDFTLHTVSNNSYLPKNTDALDLYH), 196 to 217 (SSGITFRDSMLTIGDDCVAIKE), 219 to 241 (VEKVIVSNVTCRGGHGYSIGSLG), and 249 to 270 (VKHVNFRNSTCIDCENGVRVKT). Asp-210 acts as the Proton donor in catalysis. A disulfide bridge links Cys-212 with Cys-229. Asn-226 is a glycosylation site (N-linked (GlcNAc...) asparagine). His-233 is an active-site residue. Residues Asn-256, Asn-319, and Asn-343 are each glycosylated (N-linked (GlcNAc...) asparagine). A disulfide bridge connects residues Cys-344 and Cys-350. The stretch at 350–376 (CSDITFSGIDITKASNTTDNVCVYLEG) is one PbH1 5 repeat. Residue Asn-365 is glycosylated (N-linked (GlcNAc...) asparagine).

It belongs to the glycosyl hydrolase 28 family. In terms of processing, N-glycosylated.

The protein resides in the secreted. The catalysed reaction is [(1-&gt;4)-alpha-D-galacturonosyl](n) + H2O = alpha-D-galacturonate + [(1-&gt;4)-alpha-D-galacturonosyl](n-1). In terms of biological role, specific in hydrolyzing the terminal glycosidic bond of polygalacturonic acid and oligogalacturonates. This Rhizopus delemar (strain RA 99-880 / ATCC MYA-4621 / FGSC 9543 / NRRL 43880) (Mucormycosis agent) protein is Exopolygalacturonase rpg15.